We begin with the raw amino-acid sequence, 215 residues long: Oligoribonuclease (215 aa).

Residues 5 to 170 form the Exonuclease domain; that stretch reads LVWIDCEMTG…ADIHESIREL (166 aa). The active site involves tyrosine 127.

The protein belongs to the oligoribonuclease family.

It localises to the cytoplasm. Its function is as follows. 3'-to-5' exoribonuclease specific for small oligoribonucleotides. In Mycobacterium ulcerans (strain Agy99), this protein is Oligoribonuclease.